The sequence spans 209 residues: uncharacterized protein (209 aa).

The first 17 residues, 1 to 17 (MKRLVTGLLALSLFLAA), serve as a signal peptide directing secretion. Residues 17 to 105 (ACGQDSDQQK…SNNQANNNQK (89 aa)) form a disordered region. Residue Cys-18 is the site of N-palmitoyl cysteine attachment. The S-diacylglycerol cysteine moiety is linked to residue Cys-18. A compositionally biased stretch (basic and acidic residues) spans 23-70 (DQQKDGNKEKDDKAKTEQQDKKTNDSSKDKKDNKDDSKDVNKDNKDNS). Residues 71–105 (ANDNQQQSNSNATNNDQNQTNNNQSSNNQANNNQK) are compositionally biased toward low complexity.

The protein resides in the cell membrane. This is an uncharacterized protein from Staphylococcus aureus (strain COL).